The chain runs to 375 residues: ORC1-type DNA replication protein 3 (375 aa).

ATP-binding positions include 66–70 (TGKTT), Tyr209, and Arg221.

Belongs to the CDC6/cdc18 family.

In terms of biological role, involved in regulation of DNA replication. This Haloarcula marismortui (strain ATCC 43049 / DSM 3752 / JCM 8966 / VKM B-1809) (Halobacterium marismortui) protein is ORC1-type DNA replication protein 3 (cdc6c).